A 1229-amino-acid polypeptide reads, in one-letter code: Phosphorylase b kinase regulatory subunit alpha, liver isoform (1229 aa).

The span at 625–646 shows a compositional bias: acidic residues; sequence DSLLEDDEEQEEEEEDKFEDDY. Positions 625–648 are disordered; sequence DSLLEDDEEQEEEEEDKFEDDYNN. Positions 825 to 855 are calmodulin-binding; the sequence is LEELYIQAGACKEWGLIRYISGILRKRVEVL. The segment at 1024 to 1050 is disordered; the sequence is EIKQRCSSPSTPSGILSPVGPGPADGQ. Residues 1028-1037 show a composition bias toward polar residues; the sequence is RCSSPSTPSG. Residues 1052-1092 are calmodulin-binding; that stretch reads HWVERQGQWLRRRRLDGAINRVPVGFYQKVWKILQKCHGLS. C1226 carries S-farnesyl cysteine lipidation.

The protein belongs to the phosphorylase b kinase regulatory chain family. In terms of assembly, polymer of 16 chains, four each of alpha, beta, gamma, and delta. Alpha and beta are regulatory chains, gamma is the catalytic chain, and delta is calmodulin. Post-translationally, although the final Cys may be farnesylated, the terminal tripeptide is probably not removed, and the C-terminus is not methylated.

It localises to the cell membrane. The protein operates within glycan biosynthesis; glycogen metabolism. With respect to regulation, by phosphorylation of various serine residues and by calcium. In terms of biological role, phosphorylase b kinase catalyzes the phosphorylation of serine in certain substrates, including troponin I. The alpha chain may bind calmodulin. The sequence is that of Phosphorylase b kinase regulatory subunit alpha, liver isoform (phka2) from Takifugu rubripes (Japanese pufferfish).